Here is a 498-residue protein sequence, read N- to C-terminus: uncharacterized protein (498 aa).

329–336 (GNPGTGKS) is a binding site for ATP.

It is found in the secreted. The protein localises to the cell wall. This is an uncharacterized protein from Mycobacterium tuberculosis (strain CDC 1551 / Oshkosh).